The following is a 360-amino-acid chain: MKNIFLHSLSLANYRNFKNLELKTDNTPIILIGENGSGKTNILEAISLFYPGRGLRSAKLDDICKASEDYCIVKALLQSQLGLAEFSTHIKRNSNRRITEYNESKIANNELSKFTSMVWLTPQMEGIFTSGSSDRRKFLDRIVYNFYPKHAELVSKYEYYMHERNKILAEDIRDDNWLKIIEGKMADMSSHIANNRLKTLEFMQQAIDELENEFPKADLSIDGIVEQRILDGEENLVNFITAELYQTRSKDKLLGRTSFGVHKSDFLVKHQKKNILAKFCSTGEQKAILIAIILAEMNYVIKLTKIAPILLLDEVFVHLDDTRRQYLIEFFTTLSMQLWVTDTNLEGIENFASKAQLIKL.

33 to 40 (GENGSGKT) is a binding site for ATP.

It belongs to the RecF family.

Its subcellular location is the cytoplasm. Functionally, the RecF protein is involved in DNA metabolism; it is required for DNA replication and normal SOS inducibility. RecF binds preferentially to single-stranded, linear DNA. It also seems to bind ATP. In Rickettsia akari (strain Hartford), this protein is DNA replication and repair protein RecF.